A 249-amino-acid polypeptide reads, in one-letter code: Metal-staphylopine import system ATP-binding protein CntF (249 aa).

The ABC transporter domain occupies 2–244 (IKVTDVEKSY…DNAYTRELIE (243 aa)). 42-49 (GESGSGKS) serves as a coordination point for ATP.

It belongs to the ABC transporter superfamily. The complex is composed of two ATP-binding proteins (CntD and CntF), two transmembrane proteins (CntB and CntC) and a solute-binding protein (CntA).

It is found in the cell membrane. Functionally, part of the ABC transporter complex CntABCDF (Opp1) involved in the uptake of metal in complex with the metallophore staphylopine (StP). May be involved in the import of a large array of divalent metals ions such as nickel, cobalt, zinc, copper and iron. Probably responsible for energy coupling to the transport system. The protein is Metal-staphylopine import system ATP-binding protein CntF of Staphylococcus aureus (strain Mu50 / ATCC 700699).